Consider the following 155-residue polypeptide: Ribosome maturation factor RimP (155 aa).

Belongs to the RimP family.

It localises to the cytoplasm. In terms of biological role, required for maturation of 30S ribosomal subunits. This Listeria monocytogenes serotype 4a (strain HCC23) protein is Ribosome maturation factor RimP.